A 251-amino-acid polypeptide reads, in one-letter code: Triosephosphate isomerase (251 aa).

10–12 (NWK) contacts substrate. Histidine 98 (electrophile) is an active-site residue. Glutamate 169 serves as the catalytic Proton acceptor. Substrate is bound by residues glycine 175, serine 213, and 234–235 (GG).

Belongs to the triosephosphate isomerase family. In terms of assembly, homodimer.

Its subcellular location is the cytoplasm. The enzyme catalyses D-glyceraldehyde 3-phosphate = dihydroxyacetone phosphate. The protein operates within carbohydrate biosynthesis; gluconeogenesis. It functions in the pathway carbohydrate degradation; glycolysis; D-glyceraldehyde 3-phosphate from glycerone phosphate: step 1/1. Involved in the gluconeogenesis. Catalyzes stereospecifically the conversion of dihydroxyacetone phosphate (DHAP) to D-glyceraldehyde-3-phosphate (G3P). This Paracidovorax citrulli (strain AAC00-1) (Acidovorax citrulli) protein is Triosephosphate isomerase.